We begin with the raw amino-acid sequence, 177 residues long: Large ribosomal subunit protein uL6 (177 aa).

The protein belongs to the universal ribosomal protein uL6 family. In terms of assembly, part of the 50S ribosomal subunit.

Its function is as follows. This protein binds to the 23S rRNA, and is important in its secondary structure. It is located near the subunit interface in the base of the L7/L12 stalk, and near the tRNA binding site of the peptidyltransferase center. This Rhodopseudomonas palustris (strain BisB18) protein is Large ribosomal subunit protein uL6.